We begin with the raw amino-acid sequence, 206 residues long: ATP-dependent Clp protease proteolytic subunit (206 aa).

S107 acts as the Nucleophile in catalysis. H132 is a catalytic residue.

It belongs to the peptidase S14 family. As to quaternary structure, fourteen ClpP subunits assemble into 2 heptameric rings which stack back to back to give a disk-like structure with a central cavity, resembling the structure of eukaryotic proteasomes.

The protein resides in the cytoplasm. It carries out the reaction Hydrolysis of proteins to small peptides in the presence of ATP and magnesium. alpha-casein is the usual test substrate. In the absence of ATP, only oligopeptides shorter than five residues are hydrolyzed (such as succinyl-Leu-Tyr-|-NHMec, and Leu-Tyr-Leu-|-Tyr-Trp, in which cleavage of the -Tyr-|-Leu- and -Tyr-|-Trp bonds also occurs).. Its function is as follows. Cleaves peptides in various proteins in a process that requires ATP hydrolysis. Has a chymotrypsin-like activity. Plays a major role in the degradation of misfolded proteins. The polypeptide is ATP-dependent Clp protease proteolytic subunit (Idiomarina loihiensis (strain ATCC BAA-735 / DSM 15497 / L2-TR)).